We begin with the raw amino-acid sequence, 296 residues long: Ribosomal RNA small subunit methyltransferase A (296 aa).

Positions 31, 33, 58, 79, 111, and 136 each coordinate S-adenosyl-L-methionine.

It belongs to the class I-like SAM-binding methyltransferase superfamily. rRNA adenine N(6)-methyltransferase family. RsmA subfamily.

Its subcellular location is the cytoplasm. It catalyses the reaction adenosine(1518)/adenosine(1519) in 16S rRNA + 4 S-adenosyl-L-methionine = N(6)-dimethyladenosine(1518)/N(6)-dimethyladenosine(1519) in 16S rRNA + 4 S-adenosyl-L-homocysteine + 4 H(+). Functionally, specifically dimethylates two adjacent adenosines (A1518 and A1519) in the loop of a conserved hairpin near the 3'-end of 16S rRNA in the 30S particle. May play a critical role in biogenesis of 30S subunits. This Lactobacillus johnsonii (strain CNCM I-12250 / La1 / NCC 533) protein is Ribosomal RNA small subunit methyltransferase A.